The sequence spans 221 residues: Probable septum site-determining protein MinC (221 aa).

The protein belongs to the MinC family. Interacts with MinD and FtsZ.

Cell division inhibitor that blocks the formation of polar Z ring septums. Rapidly oscillates between the poles of the cell to destabilize FtsZ filaments that have formed before they mature into polar Z rings. Prevents FtsZ polymerization. The sequence is that of Probable septum site-determining protein MinC from Aliivibrio fischeri (strain MJ11) (Vibrio fischeri).